The following is a 362-amino-acid chain: Mannose-1-phosphate guanyltransferase (362 aa).

It belongs to the transferase hexapeptide repeat family.

It localises to the cytoplasm. The catalysed reaction is alpha-D-mannose 1-phosphate + GTP + H(+) = GDP-alpha-D-mannose + diphosphate. It functions in the pathway nucleotide-sugar biosynthesis; GDP-alpha-D-mannose biosynthesis; GDP-alpha-D-mannose from alpha-D-mannose 1-phosphate (GTP route): step 1/1. In terms of biological role, involved in cell wall synthesis where it is required for glycosylation. Involved in cell cycle progression through cell-size checkpoint. The protein is Mannose-1-phosphate guanyltransferase (MPG1) of Debaryomyces hansenii (strain ATCC 36239 / CBS 767 / BCRC 21394 / JCM 1990 / NBRC 0083 / IGC 2968) (Yeast).